Consider the following 430-residue polypeptide: UDP-N-acetylmuramoylalanine--D-glutamate ligase (430 aa).

Residue 109–115 (GTDGKST) coordinates ATP.

This sequence belongs to the MurCDEF family.

Its subcellular location is the cytoplasm. The catalysed reaction is UDP-N-acetyl-alpha-D-muramoyl-L-alanine + D-glutamate + ATP = UDP-N-acetyl-alpha-D-muramoyl-L-alanyl-D-glutamate + ADP + phosphate + H(+). The protein operates within cell wall biogenesis; peptidoglycan biosynthesis. Functionally, cell wall formation. Catalyzes the addition of glutamate to the nucleotide precursor UDP-N-acetylmuramoyl-L-alanine (UMA). This Thermotoga petrophila (strain ATCC BAA-488 / DSM 13995 / JCM 10881 / RKU-1) protein is UDP-N-acetylmuramoylalanine--D-glutamate ligase.